The chain runs to 281 residues: Light-independent protochlorophyllide reductase iron-sulfur ATP-binding protein (281 aa).

ATP contacts are provided by residues 10–15 (GIGKST) and K39. Position 14 (S14) interacts with Mg(2+). [4Fe-4S] cluster-binding residues include C95 and C129. 180-181 (NR) contacts ATP.

It belongs to the NifH/BchL/ChlL family. Homodimer. Protochlorophyllide reductase is composed of three subunits; ChlL, ChlN and ChlB. The cofactor is [4Fe-4S] cluster.

It carries out the reaction chlorophyllide a + oxidized 2[4Fe-4S]-[ferredoxin] + 2 ADP + 2 phosphate = protochlorophyllide a + reduced 2[4Fe-4S]-[ferredoxin] + 2 ATP + 2 H2O. Its pathway is porphyrin-containing compound metabolism; chlorophyll biosynthesis (light-independent). In terms of biological role, component of the dark-operative protochlorophyllide reductase (DPOR) that uses Mg-ATP and reduced ferredoxin to reduce ring D of protochlorophyllide (Pchlide) to form chlorophyllide a (Chlide). This reaction is light-independent. The L component serves as a unique electron donor to the NB-component of the complex, and binds Mg-ATP. This Thermosynechococcus vestitus (strain NIES-2133 / IAM M-273 / BP-1) protein is Light-independent protochlorophyllide reductase iron-sulfur ATP-binding protein.